The following is a 453-amino-acid chain: Allantoinase (453 aa).

Positions 59, 61, 146, 186, 242, and 315 each coordinate Zn(2+). Residue K146 is modified to N6-carboxylysine.

The protein belongs to the metallo-dependent hydrolases superfamily. Allantoinase family. As to quaternary structure, homotetramer. Requires Zn(2+) as cofactor. In terms of processing, carboxylation allows a single lysine to coordinate two zinc ions.

It carries out the reaction (S)-allantoin + H2O = allantoate + H(+). It participates in nitrogen metabolism; (S)-allantoin degradation; allantoate from (S)-allantoin: step 1/1. Catalyzes the conversion of allantoin (5-ureidohydantoin) to allantoic acid by hydrolytic cleavage of the five-member hydantoin ring. This Escherichia coli (strain 55989 / EAEC) protein is Allantoinase.